The sequence spans 382 residues: Lipid-A-disaccharide synthase (382 aa).

The protein belongs to the LpxB family.

It carries out the reaction 2-N,3-O-bis[(3R)-3-hydroxytetradecanoyl]-alpha-D-glucosaminyl 1-phosphate + UDP-2-N,3-O-bis[(3R)-3-hydroxytetradecanoyl]-alpha-D-glucosamine = lipid A disaccharide (E. coli) + UDP + H(+). The enzyme catalyses a lipid X + a UDP-2-N,3-O-bis[(3R)-3-hydroxyacyl]-alpha-D-glucosamine = a lipid A disaccharide + UDP + H(+). Its pathway is glycolipid biosynthesis; lipid IV(A) biosynthesis; lipid IV(A) from (3R)-3-hydroxytetradecanoyl-[acyl-carrier-protein] and UDP-N-acetyl-alpha-D-glucosamine: step 5/6. Its function is as follows. Condensation of UDP-2,3-diacylglucosamine and 2,3-diacylglucosamine-1-phosphate to form lipid A disaccharide, a precursor of lipid A, a phosphorylated glycolipid that anchors the lipopolysaccharide to the outer membrane of the cell. This is Lipid-A-disaccharide synthase from Shigella dysenteriae serotype 1 (strain Sd197).